A 708-amino-acid chain; its full sequence is MNQYLAVTSNGLENLLVEELTQLGINDAKPVQAGVKFKATNEQIYRCCLWSRLASRFVRIVAEFKCQNDLDLYLSTTSVNWVNYFHSSKKLVVDFNGTNREIRNSQYGAMKVKDAIVDCFTKKNLPRPSISKDLADLHIHVRLHKENALLGIDMVGSGLHARGYRTEAGKAPLRETLAAAIILRSGWDASKPLLDPMCGSGTLLIEAAMMAANIAPGLQRKKWGFEALEDFEPELWASVKSEASVQGKRGVKKVETHFYGVDNDNRVLQTAKDNARRAGVEELISFTLGDAAKVKRPENFAEGIVICNPPYGERLGTHPGLIALYTAFGAQLKAEFGGCHASIFSSSDELLSCLRMRADKQFKLNNGALPCHQKNYTIAMREQNSVSNEGTQEILIAPDFANRLKKNFNKIGKWAKREGLDCFRLYDADLPEYNVAIDVYQDHLMIQEYAAPKDIPEEKAKRRLTDIIRAAIQVLDVDANNVVLKVRERQKGTSQYEKLGQQAQTMQITEYGVKLIVNLYDYLDTGLFLDHKITRRRLGQMAQGKDFLNLFAYTGSATVHAACGGAKSTTTVDMSKTYLEWAKENMQLNGQVGRQHQYVQADCLQWLANAQSQYDLIFIDPPTFSNSKRMEQTFDVQRDHVTLMTNLKRLLRPEGTIVFSNNKRHFKMDMEALHALGLNAQNISHQTLPLDFERNKQIHNCWLITHQS.

One can recognise a THUMP domain in the interval 43–154 (QIYRCCLWSR…KENALLGIDM (112 aa)).

The protein belongs to the methyltransferase superfamily. RlmKL family.

It is found in the cytoplasm. The enzyme catalyses guanosine(2445) in 23S rRNA + S-adenosyl-L-methionine = N(2)-methylguanosine(2445) in 23S rRNA + S-adenosyl-L-homocysteine + H(+). It carries out the reaction guanosine(2069) in 23S rRNA + S-adenosyl-L-methionine = N(2)-methylguanosine(2069) in 23S rRNA + S-adenosyl-L-homocysteine + H(+). Functionally, specifically methylates the guanine in position 2445 (m2G2445) and the guanine in position 2069 (m7G2069) of 23S rRNA. The chain is Ribosomal RNA large subunit methyltransferase K/L from Vibrio cholerae serotype O1 (strain ATCC 39541 / Classical Ogawa 395 / O395).